A 315-amino-acid chain; its full sequence is MDIQWFATGVGAAVVLYIFYHFIRIILNILVPYAFCQPIDLKKKAGASWAVVTGATDGIGKSYSFELARRGFNVYIVSRTQSKLEQTKKDILEKQPDIEVRFATYDFTNPSVTDYEKLLSKLNEVSVGILINNVGMFFDYPEMLHKINGGIDSIANVIIINTLPATLLSAGILPQMVSRKAGIIVNIGSFAGVVKLAEWSIYSATKKYVEWLTGCLRKEYSHHGIIFQAITPAMVATKMAGNPNTSFFCPDSDTFARSALNTIGHASETTGYIAHQIQCEILKLLPDFVIDRSIKKGNAEFREKALAKSENKPLA.

47 to 76 serves as a coordination point for NADP(+); sequence ASWAVVTGATDGIGKSYSFELARRGFNVYI. Residue Tyr-202 is part of the active site.

Belongs to the short-chain dehydrogenases/reductases (SDR) family. 17-beta-HSD 3 subfamily.

In Caenorhabditis elegans, this protein is Putative steroid dehydrogenase 2 (stdh-2).